The primary structure comprises 410 residues: Alanine racemase (410 aa).

In terms of domain architecture, RPE1 insert spans 28 to 76 (VDFLHNVANKEEFAGNTSPRTAAYTLVREDASLGSTPKLPLGASYAKNL). The Proton acceptor; specific for D-alanine role is filled by Lys-83. Residue Lys-83 is modified to N6-(pyridoxal phosphate)lysine. A substrate-binding site is contributed by Arg-182. Tyr-305 functions as the Proton acceptor; specific for L-alanine in the catalytic mechanism. Met-353 contacts substrate.

Belongs to the alanine racemase family. Requires pyridoxal 5'-phosphate as cofactor.

It catalyses the reaction L-alanine = D-alanine. Its pathway is amino-acid biosynthesis; D-alanine biosynthesis; D-alanine from L-alanine: step 1/1. Catalyzes the interconversion of L-alanine and D-alanine. May also act on other amino acids. The sequence is that of Alanine racemase (alr) from Rickettsia bellii (strain RML369-C).